The chain runs to 78 residues: cAMP-dependent protein kinase inhibitor beta (78 aa).

Over residues 1 to 10 (MRTDSSKMTD) the composition is skewed to basic and acidic residues. Residues 1 to 78 (MRTDSSKMTD…QLEKPQNEEK (78 aa)) form a disordered region. Residues 33 to 42 (IQSSAATDGT) show a composition bias toward polar residues. The span at 53–78 (SVKEDAKEKDEKTTQDQLEKPQNEEK) shows a compositional bias: basic and acidic residues.

Belongs to the PKI family.

Functionally, extremely potent competitive inhibitor of cAMP-dependent protein kinase activity, this protein interacts with the catalytic subunit of the enzyme after the cAMP-induced dissociation of its regulatory chains. In Homo sapiens (Human), this protein is cAMP-dependent protein kinase inhibitor beta (PKIB).